A 267-amino-acid polypeptide reads, in one-letter code: Thiamine thiazole synthase (267 aa).

NAD(+) contacts are provided by residues Ser-41, 60-61 (ER), Gly-68, Val-132, and 160-162 (HVD). The Fe cation site is built by Asp-162 and His-177. Position 227 (Met-227) interacts with NAD(+). A glycine-binding site is contributed by Arg-237.

It belongs to the THI4 family. In terms of assembly, homooctamer; tetramer of dimers. The cofactor is Fe(2+).

The catalysed reaction is hydrogen sulfide + glycine + NAD(+) = ADP-5-ethyl-4-methylthiazole-2-carboxylate + nicotinamide + 3 H2O + H(+). The protein operates within cofactor biosynthesis; thiamine diphosphate biosynthesis. Functionally, involved in the biosynthesis of the thiazole moiety of thiamine. Catalyzes the conversion of NAD and glycine to adenosine diphosphate 5-(2-hydroxyethyl)-4-methylthiazole-2-carboxylate (ADT), an adenylated thiazole intermediate, using free sulfide as a source of sulfur. In Saccharolobus islandicus (strain Y.N.15.51 / Yellowstone #2) (Sulfolobus islandicus), this protein is Thiamine thiazole synthase.